A 166-amino-acid chain; its full sequence is Phospholipase A2 inhibitor clone 05 (166 aa).

The first 19 residues, 1-19 (MRLILLSSLLLLGIFLADG), serve as a signal peptide directing secretion. Positions 46-161 (LKGAFLTVHR…CDDNLLVVCE (116 aa)) constitute a C-type lectin domain. Disulfide bonds link Cys83–Cys160 and Cys138–Cys152. Asn122 carries N-linked (GlcNAc...) asparagine glycosylation.

This sequence belongs to the alpha-type phospholipase A2 inhibitor family. As to quaternary structure, homotrimer; non-covalently linked. Expressed by the liver.

It localises to the secreted. In terms of biological role, this phospholipase A2 inhibitor binds directly phospholipase A2 in the presence or absence of calcium. This Bothrops moojeni (Lance-headed viper) protein is Phospholipase A2 inhibitor clone 05.